Consider the following 284-residue polypeptide: 3-methyl-2-oxobutanoate hydroxymethyltransferase 2 (284 aa).

Asp-49 and Asp-88 together coordinate Mg(2+). 3-methyl-2-oxobutanoate is bound by residues 49 to 50, Asp-88, and Lys-118; that span reads DS. Glu-120 contacts Mg(2+). Glu-187 acts as the Proton acceptor in catalysis.

The protein belongs to the PanB family. In terms of assembly, homodecamer; pentamer of dimers. The cofactor is Mg(2+).

Its subcellular location is the cytoplasm. It catalyses the reaction 3-methyl-2-oxobutanoate + (6R)-5,10-methylene-5,6,7,8-tetrahydrofolate + H2O = 2-dehydropantoate + (6S)-5,6,7,8-tetrahydrofolate. It functions in the pathway cofactor biosynthesis; (R)-pantothenate biosynthesis; (R)-pantoate from 3-methyl-2-oxobutanoate: step 1/2. Functionally, catalyzes the reversible reaction in which hydroxymethyl group from 5,10-methylenetetrahydrofolate is transferred onto alpha-ketoisovalerate to form ketopantoate. This Burkholderia ambifaria (strain ATCC BAA-244 / DSM 16087 / CCUG 44356 / LMG 19182 / AMMD) (Burkholderia cepacia (strain AMMD)) protein is 3-methyl-2-oxobutanoate hydroxymethyltransferase 2.